We begin with the raw amino-acid sequence, 274 residues long: Homeobox-leucine zipper protein HAT9 (274 aa).

The segment covering 64–74 (SSHSGVSSFSS) has biased composition (low complexity). The interval 64–96 (SSHSGVSSFSSGRVVKRERDGGEESPEEEEMTE) is disordered. The homeobox DNA-binding region spans 110–169 (SARKKLRLTKQQSALLEESFKDHSTLNPKQKQVLARQLNLRPRQVEVWFQNRRARTKLKQ). A leucine-zipper region spans residues 177–198 (LKKCCETLADENIRLQKEIQEL).

This sequence belongs to the HD-ZIP homeobox family. Class II subfamily.

Its subcellular location is the nucleus. Functionally, probable transcription factor. This chain is Homeobox-leucine zipper protein HAT9 (HAT9), found in Arabidopsis thaliana (Mouse-ear cress).